The chain runs to 91 residues: MAVKIRLTRMGSKKKPFYRINVADSRAPRDGRFIETVGTYNPLVTENQVTLKEDRILEWLGNGAQPSDTVRNILSKAGIMQKFHEAKYSKK.

The protein belongs to the bacterial ribosomal protein bS16 family.

This Streptococcus mutans serotype c (strain ATCC 700610 / UA159) protein is Small ribosomal subunit protein bS16.